The following is a 39-amino-acid chain: Cytochrome b559 subunit beta (39 aa).

Residues Trp14–Ser30 traverse the membrane as a helical segment. A heme-binding site is contributed by His18.

It belongs to the PsbE/PsbF family. In terms of assembly, heterodimer of an alpha subunit and a beta subunit. PSII is composed of 1 copy each of membrane proteins PsbA, PsbB, PsbC, PsbD, PsbE, PsbF, PsbH, PsbI, PsbJ, PsbK, PsbL, PsbM, PsbT, PsbX, PsbY, PsbZ, Psb30/Ycf12, at least 3 peripheral proteins of the oxygen-evolving complex and a large number of cofactors. It forms dimeric complexes. Heme b serves as cofactor.

It localises to the plastid. The protein resides in the chloroplast thylakoid membrane. This b-type cytochrome is tightly associated with the reaction center of photosystem II (PSII). PSII is a light-driven water:plastoquinone oxidoreductase that uses light energy to abstract electrons from H(2)O, generating O(2) and a proton gradient subsequently used for ATP formation. It consists of a core antenna complex that captures photons, and an electron transfer chain that converts photonic excitation into a charge separation. This Gnetum gnemon (Spanish joint-fir) protein is Cytochrome b559 subunit beta.